The primary structure comprises 382 residues: Deoxyhypusine synthase (382 aa).

Residues S108 to S112, T134 to G136, E140, and D257 contribute to the NAD(+) site. Residue E139–E140 coordinates spermidine. D262 contributes to the spermidine binding site. NAD(+) is bound at residue G304. Residue H309 coordinates spermidine. Position 329–330 (T329–G330) interacts with NAD(+). Residues G335–D337 and E344–K350 contribute to the spermidine site. The Nucleophile role is filled by K350. Position 363–364 (D363–V364) interacts with NAD(+).

It belongs to the deoxyhypusine synthase family. It depends on NAD(+) as a cofactor.

The catalysed reaction is [eIF5A protein]-L-lysine + spermidine = [eIF5A protein]-deoxyhypusine + propane-1,3-diamine. Its pathway is protein modification; eIF5A hypusination. In terms of biological role, catalyzes the NAD-dependent oxidative cleavage of spermidine and the subsequent transfer of the butylamine moiety of spermidine to the epsilon-amino group of a specific lysine residue of the eIF-5A precursor protein to form the intermediate deoxyhypusine residue. The chain is Deoxyhypusine synthase (DYS1) from Eremothecium gossypii (strain ATCC 10895 / CBS 109.51 / FGSC 9923 / NRRL Y-1056) (Yeast).